The following is a 414-amino-acid chain: Methanesulfonate monooxygenase hydroxylase subunit alpha (414 aa).

Residues Trp-44 to Trp-163 form the Rieske domain. 4 residues coordinate [2Fe-2S] cluster: Cys-86, His-88, Cys-115, and His-118. Residue His-225 coordinates Fe cation.

The protein belongs to the bacterial ring-hydroxylating dioxygenase alpha subunit family. In terms of assembly, the MSA monooxygenase system consists of 4 proteins: the 2 subunits of the hydroxylase component (MsmA and MsmB), a ferredoxin (MsmC) and a ferredoxin reductase (MsmD). The hydroxylase component consists of a 3 alpha (MsmA) and 3 beta (MsmB) subunits. [2Fe-2S] cluster serves as cofactor. The cofactor is Fe cation.

It is found in the cytoplasm. It catalyses the reaction methanesulfonate + NADH + O2 = sulfite + formaldehyde + NAD(+) + H2O. MSAMO is inhibited by metal chelators (such as bathophenanthroline, bathocuprione, neocuprione, alpha-alpha-dipyridil and sodium EDTA) and by sodium azide, sodium arsenate and potassium cyanide. In terms of biological role, methanesulfonate monooxygenase (MSAMO) mediates the primary degradation of methanesulfonic acid (MSA) to produce formaldehyd and inorganic sulfite by initial hydroxylation of the carbon atom prior to spontaneous cleavage of the unstable hydroxymethanesulfonic acid. MSAMO has a restricted substrate range that includes only the short-chain aliphatic sulfonates (methane- to butanesulfonate) and excludes all larger molecules, such as arylsulfonates and aromatic sulfonates. All MSAMO components are required for enzyme activity. In Methylosulfonomonas methylovora, this protein is Methanesulfonate monooxygenase hydroxylase subunit alpha.